The following is a 170-amino-acid chain: Lipoprotein signal peptidase (170 aa).

3 helical membrane-spanning segments follow: residues 12 to 32 (WYWI…WVLS), 67 to 87 (WQRW…SVWL), and 94 to 113 (MWRL…GNLI). Catalysis depends on residues aspartate 123 and aspartate 141. Residues 133-153 (HFPAFNIADSAICIGAGLIIL) traverse the membrane as a helical segment.

This sequence belongs to the peptidase A8 family.

The protein localises to the cell inner membrane. It carries out the reaction Release of signal peptides from bacterial membrane prolipoproteins. Hydrolyzes -Xaa-Yaa-Zaa-|-(S,diacylglyceryl)Cys-, in which Xaa is hydrophobic (preferably Leu), and Yaa (Ala or Ser) and Zaa (Gly or Ala) have small, neutral side chains.. The protein operates within protein modification; lipoprotein biosynthesis (signal peptide cleavage). This protein specifically catalyzes the removal of signal peptides from prolipoproteins. In Shewanella piezotolerans (strain WP3 / JCM 13877), this protein is Lipoprotein signal peptidase.